Reading from the N-terminus, the 297-residue chain is Flavin-dependent thymidylate synthase (297 aa).

The ThyX domain maps to 41–251 (GFVRLVDYMG…PLTYAAFVEY (211 aa)). FAD-binding positions include threonine 87, 110–112 (RHR), and glutamate 118. DUMP-binding positions include 107–110 (QWVR), 118–122 (EYSAR), and arginine 190. A ThyX motif motif is present at residues 110–120 (RHRTANVNEYS). Residues 206-208 (DLH) and histidine 212 each bind FAD. Residue arginine 217 participates in dUMP binding. The active-site Involved in ionization of N3 of dUMP, leading to its activation is arginine 217.

It belongs to the thymidylate synthase ThyX family. As to quaternary structure, homotetramer. Requires FAD as cofactor.

It catalyses the reaction dUMP + (6R)-5,10-methylene-5,6,7,8-tetrahydrofolate + NADPH + H(+) = dTMP + (6S)-5,6,7,8-tetrahydrofolate + NADP(+). Its pathway is pyrimidine metabolism; dTTP biosynthesis. Catalyzes the reductive methylation of 2'-deoxyuridine-5'-monophosphate (dUMP) to 2'-deoxythymidine-5'-monophosphate (dTMP) while utilizing 5,10-methylenetetrahydrofolate (mTHF) as the methyl donor, and NADPH and FADH(2) as the reductant. This chain is Flavin-dependent thymidylate synthase, found in Ehrlichia ruminantium (strain Gardel).